We begin with the raw amino-acid sequence, 273 residues long: R-spondin-3 (273 aa).

Residues 1-21 (MHLRLISWFFIILNFMEYIGS) form the signal peptide. FU repeat units lie at residues 35–86 (PNVS…GYYG) and 92–135 (INKC…GLEA). N36 carries an N-linked (GlcNAc...) asparagine glycan. Disulfide bonds link C41/C48, C45/C54, C57/C76, C80/C95, C98/C105, C102/C111, C114/C125, C129/C142, C148/C190, C159/C166, and C199/C206. One can recognise a TSP type-1 domain in the interval 147 to 207 (HCEASEWSPW…KCTVQRKKCP (61 aa)). A disordered region spans residues 201–273 (VQRKKCPKGE…QKSVSVSTVH (73 aa)). Over residues 213–223 (RKGRERKRKKP) the composition is skewed to basic residues. The span at 224–252 (NKEESKDAIPDNKGLEPSRETPEQRENKQ) shows a compositional bias: basic and acidic residues.

The protein belongs to the R-spondin family. In terms of assembly, interacts with the extracellular domain of FZD8 and LRP6. It however does not form a ternary complex with FZD8 and LRP6. Interacts with WNT1. Binds heparin. Interacts with LGR4, LGR5 and LGR6.

It localises to the secreted. In terms of biological role, activator of the canonical Wnt signaling pathway by acting as a ligand for LGR4-6 receptors, which acts as a key regulator of angiogenesis. Upon binding to LGR4-6 (LGR4, LGR5 or LGR6), LGR4-6 associate with phosphorylated LRP6 and frizzled receptors that are activated by extracellular Wnt receptors, triggering the canonical Wnt signaling pathway to increase expression of target genes. Also regulates the canonical Wnt/beta-catenin-dependent pathway and non-canonical Wnt signaling by acting as an inhibitor of ZNRF3, an important regulator of the Wnt signaling pathway. Acts as a ligand for frizzled FZD8 and LRP6. May negatively regulate the TGF-beta pathway. Acts as a key regulator of angiogenesis by controlling vascular stability and pruning: acts by activating the non-canonical Wnt signaling pathway in endothelial cells. Can also amplify Wnt signaling pathway independently of LGR4-6 receptors, possibly by acting as a direct antagonistic ligand to RNF43 and ZNRF3. This Bos taurus (Bovine) protein is R-spondin-3 (RSPO3).